Consider the following 287-residue polypeptide: Protease HtpX (287 aa).

2 helical membrane passes run I4 to I24 and S33 to I53. H139 provides a ligand contact to Zn(2+). E140 is a catalytic residue. A Zn(2+)-binding site is contributed by H143. 2 helical membrane passes run L154 to I174 and A195 to F215. Residue E220 participates in Zn(2+) binding.

It belongs to the peptidase M48B family. The cofactor is Zn(2+).

It localises to the cell inner membrane. The chain is Protease HtpX from Shewanella piezotolerans (strain WP3 / JCM 13877).